The primary structure comprises 337 residues: Glyceraldehyde-3-phosphate dehydrogenase (337 aa).

NAD(+) is bound by residues 12–13 (RI), Asp34, and Arg79. D-glyceraldehyde 3-phosphate-binding positions include 150–152 (SCT), Thr181, 210–211 (TG), and Arg233. Cys151 (nucleophile) is an active-site residue. NAD(+) is bound at residue Asn315.

This sequence belongs to the glyceraldehyde-3-phosphate dehydrogenase family. As to quaternary structure, homotetramer.

The protein resides in the cytoplasm. It carries out the reaction D-glyceraldehyde 3-phosphate + phosphate + NAD(+) = (2R)-3-phospho-glyceroyl phosphate + NADH + H(+). Its pathway is carbohydrate degradation; glycolysis; pyruvate from D-glyceraldehyde 3-phosphate: step 1/5. In Omphalotus olearius (Jack o'lantern), this protein is Glyceraldehyde-3-phosphate dehydrogenase (GPD).